Reading from the N-terminus, the 225-residue chain is PKHD-type hydroxylase YbiX (225 aa).

A Fe2OG dioxygenase domain is found at 78-177 (TLSTPLFNRY…RVASFMWIQS (100 aa)). Residues H96, D98, and H158 each contribute to the Fe cation site. Position 168 (R168) interacts with 2-oxoglutarate.

Requires Fe(2+) as cofactor. The cofactor is L-ascorbate.

The protein is PKHD-type hydroxylase YbiX of Shigella sonnei (strain Ss046).